Here is a 222-residue protein sequence, read N- to C-terminus: UPF0128 protein PYRAB08320 (222 aa).

This sequence belongs to the UPF0128 family.

The protein is UPF0128 protein PYRAB08320 of Pyrococcus abyssi (strain GE5 / Orsay).